The chain runs to 702 residues: Pseudouridylate synthase PUS7L (702 aa).

The residue at position 79 (Ser-79) is a Phosphoserine. Residues 84 to 116 form a disordered region; it reads NSEGAADLPGCSDGDRSHQSDSEKENSVNSVTS. Over residues 96-109 the composition is skewed to basic and acidic residues; the sequence is DGDRSHQSDSEKEN. Asp-339 acts as the Nucleophile in catalysis. Residues 424 to 646 enclose the TRUD domain; sequence GFVNYYGPQR…PGCYRHIVKH (223 aa).

It belongs to the pseudouridine synthase TruD family.

It carries out the reaction a uridine in mRNA = a pseudouridine in mRNA. In terms of biological role, pseudouridine synthase that catalyzes pseudouridylation of mRNAs. This Mus musculus (Mouse) protein is Pseudouridylate synthase PUS7L.